We begin with the raw amino-acid sequence, 1214 residues long: Spliceosome-associated protein 130 A (1214 aa).

Residues 817-848 (AGGVGENGNGNADQMENGADDEDKEDPLSDEQ) form a disordered region. Residues 834–845 (GADDEDKEDPLS) show a composition bias toward acidic residues.

The protein belongs to the RSE1 family. In terms of assembly, identified in the spliceosome C complex. Component of the U11/U12 snRNPs that are part of the U12-type spliceosome. Component of splicing factor SF3B complex. Expressed at low levels in roots, leaves, inflorescence and, to a lower extent, in siliques.

It is found in the nucleus. Functionally, subunit of the splicing factor SF3B required for 'A' complex assembly formed by the stable binding of U2 snRNP to the branchpoint sequence (BPS) in pre-mRNA. Sequence independent binding of SF3A/SF3B complex upstream of the branch site is essential, it may anchor U2 snRNP to the pre-mRNA. May also be involved in the assembly of the 'E' complex. Also belongs to the minor U12-dependent spliceosome, which is involved in the splicing of rare class of nuclear pre-mRNA intron. Required for pollen and ovule development, especially during the transition from microspore to the bicellular stage in pollen development. Involved in the accumulation of QRT1 and QRT3. This chain is Spliceosome-associated protein 130 A, found in Arabidopsis thaliana (Mouse-ear cress).